The sequence spans 104 residues: Flagellar hook-basal body complex protein FliE (104 aa).

Belongs to the FliE family.

The protein localises to the bacterial flagellum basal body. In Salmonella newport (strain SL254), this protein is Flagellar hook-basal body complex protein FliE.